The sequence spans 216 residues: Somatotropin (216 aa).

A signal peptide spans 1-26 (MAAGPRNSMLLVFALLSLPWPQEVGA). Histidine 45 is a binding site for Zn(2+). The cysteines at positions 78 and 189 are disulfide-linked. Residue serine 131 is modified to Phosphoserine. Glutamate 198 contributes to the Zn(2+) binding site. Cysteines 206 and 214 form a disulfide.

Belongs to the somatotropin/prolactin family.

It is found in the secreted. Functionally, plays an important role in growth control. Its major role in stimulating body growth is to stimulate the liver and other tissues to secrete IGF1. It stimulates both the differentiation and proliferation of myoblasts. It also stimulates amino acid uptake and protein synthesis in muscle and other tissues. This chain is Somatotropin (GH1), found in Neovison vison (American mink).